Reading from the N-terminus, the 524-residue chain is MDTESTYSGYSYYSSHSKKSHRQGERTRERHKSPRNKDGRGSEKSVTIQPPTGEPLLGNDSTRTEEVQDDNWGETTTAITGTSEHSISQEDIARISKDMEDSVGLDCKRYLGLTVASFLGLLVFLTPIAFILLPPILWRDELEPCGTICEGLFISMAFKLLILLIGTWALFFRKRRADMPRVFVFRALLLVLIFLFVVSYWLFYGVRILDSRDRNYQGIVQYAVSLVDALLFIHYLAIVLLELRQLQPMFTLQVVRSTDGESRFYSLGHLSIQRAALVVLENYYKDFTIYNPNLLTASKFRAAKHMAGLKVYNVDGPSNNATGQSRAMIAAAARRRDSSHNELYYEEAEHERRVKKRKARLVVAVEEAFIHIQRLQAEEQQKAPGEVMDPREAAQAIFPSMARALQKYLRITRQQNYHSMESILQHLAFCITNGMTPKAFLERYLSAGPTLQYDKDRWLSTQWRLVSDEAVTNGLRDGIVFVLKCLDFSLVVNVKKIPFIILSEEFIDPKSHKFVLRLQSETSV.

The span at 1 to 15 shows a compositional bias: low complexity; that stretch reads MDTESTYSGYSYYSS. A disordered region spans residues 1-85; it reads MDTESTYSGY…TTAITGTSEH (85 aa). Residues 1-117 are Cytoplasmic-facing; that stretch reads MDTESTYSGY…KRYLGLTVAS (117 aa). The span at 73 to 85 shows a compositional bias: polar residues; the sequence is GETTTAITGTSEH. A phosphoserine mark is found at Ser86 and Ser88. Residues 118–138 traverse the membrane as a helical segment; it reads FLGLLVFLTPIAFILLPPILW. Topologically, residues 139–151 are extracellular; that stretch reads RDELEPCGTICEG. Residues 152–172 traverse the membrane as a helical segment; it reads LFISMAFKLLILLIGTWALFF. Residues 173 to 182 lie on the Cytoplasmic side of the membrane; it reads RKRRADMPRV. Residues 183 to 203 form a helical membrane-spanning segment; it reads FVFRALLLVLIFLFVVSYWLF. At 204–222 the chain is on the extracellular side; that stretch reads YGVRILDSRDRNYQGIVQY. Residues 223–243 traverse the membrane as a helical segment; sequence AVSLVDALLFIHYLAIVLLEL. Over 244–524 the chain is Cytoplasmic; sequence RQLQPMFTLQ…VLRLQSETSV (281 aa).

Belongs to the Vang family. Heterodimer with VANGL2. Interacts through its C-terminal region with the N-terminal half of DVL1, DVL2 and DVL3. The PDZ domain of DVL1, DVL2 and DVL3 is required for the interaction. According to PubMed:11956595, ubiquitously expressed. According to PubMed:12011995, expressed specifically in testis and ovary.

It is found in the cell membrane. The protein is Vang-like protein 1 (VANGL1) of Homo sapiens (Human).